Here is a 505-residue protein sequence, read N- to C-terminus: Glucan endo-1,3-beta-glucosidase 2 (505 aa).

The N-terminal stretch at 1–20 is a signal peptide; it reads MASLLHLLLLSLSLLVLASA. A glycan (N-linked (GlcNAc...) asparagine) is linked at Asn-97. Glu-125 acts as the Proton donor in catalysis. N-linked (GlcNAc...) asparagine glycosylation is found at Asn-180 and Asn-262. Glu-272 acts as the Nucleophile in catalysis. Residues Asn-304, Asn-361, and Asn-365 are each glycosylated (N-linked (GlcNAc...) asparagine). Cysteines 369 and 432 form a disulfide. Residues Asn-461, Asn-466, and Asn-473 are each glycosylated (N-linked (GlcNAc...) asparagine). Ser-477 carries the GPI-anchor amidated serine lipid modification. The propeptide at 478-505 is removed in mature form; sequence SGIRSDLYYSRGIWSILTVMILNVANIL.

This sequence belongs to the glycosyl hydrolase 17 family. Post-translationally, contains two additional disulfide bonds.

The protein localises to the cell membrane. It carries out the reaction Hydrolysis of (1-&gt;3)-beta-D-glucosidic linkages in (1-&gt;3)-beta-D-glucans.. The chain is Glucan endo-1,3-beta-glucosidase 2 from Arabidopsis thaliana (Mouse-ear cress).